The chain runs to 613 residues: Ribosome-associated molecular chaperone SSB1 (613 aa).

The tract at residues Met-1–Asp-391 is nucleotide binding domain (NBD). Residues Thr-16–Tyr-18, Lys-73, Gly-205–Thr-207, Glu-271–Ser-278, and Gly-342 contribute to the ATP site. Residues Thr-392–Pro-402 are inter-domain linker. The segment at Leu-403 to Arg-613 is substrate binding domain (SBD). The interval Thr-516–Thr-612 is lid domain (SBDalpha). The Nuclear export signal signature appears at Ile-574–Leu-582.

The protein belongs to the heat shock protein 70 family. Ssb-type Hsp70 subfamily. Binds to ribosomes. Binds close to the ribosomal tunnel exit via contacts with both ribosomal proteins and rRNA. Directly interacts with nascent polypeptides. This interaction is dependent on the ribosome-associated complex (RAC). Interacts with SSE1. Interacts with FES1.

Its subcellular location is the cytoplasm. It carries out the reaction ATP + H2O = ADP + phosphate + H(+). Ribosome-bound, Hsp70-type chaperone that assists in the cotranslational folding of newly synthesized proteins in the cytosol. Stimulates folding by interacting with nascent chains, binding to short, largely hydrophobic sequences exposed by unfolded proteins, thereby stabilizing longer, more slowly translated, and aggregation-prone nascent polypeptides and domains that cannot fold stably until fully synthesized. The Hsp70-protein substrate interaction depends on ATP-binding and on allosteric regulation between the NBD and the SBD. The ATP-bound state is characterized by a fast exchange rate of substrate (low affinity state), while in the ADP-bound state exchange is much slower (high affinity state). During the Hsp70 cycle, the chaperone switches between the ATP-bound state (open conformation) and the ADP-bound state (closed conformation) by major conformational rearrangements involving mainly the lid domain. Ssb cooperates with a specific Hsp40/Hsp70 co-chaperone termed the ribosome-associated complex (RAC), which stimulates the ATPase activity of the ribosome-associated pool of Ssbs and switches it to the high affinity substrate binding state. Hsp110 chaperone SSE1 and FES1 act as nucleotide exchange factors that cause substrate release. The chain is Ribosome-associated molecular chaperone SSB1 (SSB1) from Candida albicans (strain WO-1) (Yeast).